Consider the following 235-residue polypeptide: Transmembrane protein 182 (235 aa).

A signal peptide spans M1–A33. The Extracellular portion of the chain corresponds to K34–N122. N-linked (GlcNAc...) asparagine glycosylation is found at N48, N90, and N107. A helical membrane pass occupies residues I123 to A143. Topologically, residues P144 to G155 are cytoplasmic. A helical transmembrane segment spans residues G156–V176. The Extracellular segment spans residues Q177–S205. The helical transmembrane segment at F206 to V226 threads the bilayer. Over G227 to K235 the chain is Cytoplasmic.

Belongs to the TMEM182 family.

The protein resides in the cell membrane. May negatively regulate myogenesis and skeletal muscle regeneration. This is Transmembrane protein 182 (tmem182) from Xenopus tropicalis (Western clawed frog).